The sequence spans 145 residues: D-aminoacyl-tRNA deacylase (145 aa).

Residues G137–P138 carry the Gly-cisPro motif, important for rejection of L-amino acids motif.

It belongs to the DTD family. Homodimer.

It localises to the cytoplasm. The catalysed reaction is glycyl-tRNA(Ala) + H2O = tRNA(Ala) + glycine + H(+). It catalyses the reaction a D-aminoacyl-tRNA + H2O = a tRNA + a D-alpha-amino acid + H(+). In terms of biological role, an aminoacyl-tRNA editing enzyme that deacylates mischarged D-aminoacyl-tRNAs. Also deacylates mischarged glycyl-tRNA(Ala), protecting cells against glycine mischarging by AlaRS. Acts via tRNA-based rather than protein-based catalysis; rejects L-amino acids rather than detecting D-amino acids in the active site. By recycling D-aminoacyl-tRNA to D-amino acids and free tRNA molecules, this enzyme counteracts the toxicity associated with the formation of D-aminoacyl-tRNA entities in vivo and helps enforce protein L-homochirality. The chain is D-aminoacyl-tRNA deacylase from Stutzerimonas stutzeri (strain A1501) (Pseudomonas stutzeri).